A 373-amino-acid polypeptide reads, in one-letter code: Cytoplasmic tRNA 2-thiolation protein 1 (373 aa).

It belongs to the TtcA family. CTU1/NCS6/ATPBD3 subfamily.

The protein resides in the cytoplasm. It participates in tRNA modification; 5-methoxycarbonylmethyl-2-thiouridine-tRNA biosynthesis. Its function is as follows. Plays a central role in 2-thiolation of mcm(5)S(2)U at tRNA wobble positions of tRNA(Lys), tRNA(Glu) and tRNA(Gln). Directly binds tRNAs and probably acts by catalyzing adenylation of tRNAs, an intermediate required for 2-thiolation. It is unclear whether it acts as a sulfurtransferase that transfers sulfur from thiocarboxylated URM1 onto the uridine of tRNAs at wobble position. Prior mcm(5) tRNA modification by the elongator complex is required for 2-thiolation. May also be involved in protein urmylation. The polypeptide is Cytoplasmic tRNA 2-thiolation protein 1 (Eremothecium gossypii (strain ATCC 10895 / CBS 109.51 / FGSC 9923 / NRRL Y-1056) (Yeast)).